The chain runs to 408 residues: Acetylornithine/succinyldiaminopimelate aminotransferase (408 aa).

Pyridoxal 5'-phosphate is bound by residues 108–109 (GA) and phenylalanine 141. N(2)-acetyl-L-ornithine is bound at residue arginine 144. Residue 226–229 (DEIQ) participates in pyridoxal 5'-phosphate binding. N6-(pyridoxal phosphate)lysine is present on lysine 255. Threonine 283 contacts N(2)-acetyl-L-ornithine. Position 284 (threonine 284) interacts with pyridoxal 5'-phosphate.

It belongs to the class-III pyridoxal-phosphate-dependent aminotransferase family. ArgD subfamily. In terms of assembly, homodimer. It depends on pyridoxal 5'-phosphate as a cofactor.

Its subcellular location is the cytoplasm. The catalysed reaction is N(2)-acetyl-L-ornithine + 2-oxoglutarate = N-acetyl-L-glutamate 5-semialdehyde + L-glutamate. It carries out the reaction N-succinyl-(2S,6S)-2,6-diaminopimelate + 2-oxoglutarate = (S)-2-succinylamino-6-oxoheptanedioate + L-glutamate. Its pathway is amino-acid biosynthesis; L-arginine biosynthesis; N(2)-acetyl-L-ornithine from L-glutamate: step 4/4. The protein operates within amino-acid biosynthesis; L-lysine biosynthesis via DAP pathway; LL-2,6-diaminopimelate from (S)-tetrahydrodipicolinate (succinylase route): step 2/3. Functionally, involved in both the arginine and lysine biosynthetic pathways. The sequence is that of Acetylornithine/succinyldiaminopimelate aminotransferase from Buchnera aphidicola subsp. Acyrthosiphon pisum (strain APS) (Acyrthosiphon pisum symbiotic bacterium).